The primary structure comprises 376 residues: Glutamate 5-kinase (376 aa).

Lys16 provides a ligand contact to ATP. Residues Ser56, Asp143, and Asn155 each coordinate substrate. ATP is bound at residue 175–176 (TD). One can recognise a PUA domain in the interval 283–361 (RGALSLDEGA…RDIETTLGYV (79 aa)).

It belongs to the glutamate 5-kinase family.

The protein resides in the cytoplasm. It carries out the reaction L-glutamate + ATP = L-glutamyl 5-phosphate + ADP. It participates in amino-acid biosynthesis; L-proline biosynthesis; L-glutamate 5-semialdehyde from L-glutamate: step 1/2. Functionally, catalyzes the transfer of a phosphate group to glutamate to form L-glutamate 5-phosphate. The protein is Glutamate 5-kinase of Halorhodospira halophila (strain DSM 244 / SL1) (Ectothiorhodospira halophila (strain DSM 244 / SL1)).